The chain runs to 163 residues: NADH-quinone oxidoreductase subunit I (163 aa).

2 4Fe-4S ferredoxin-type domains span residues 53–83 and 94–123; these read LRRY…IEAG and VRYD…EGPN. [4Fe-4S] cluster-binding residues include Cys-63, Cys-66, Cys-69, Cys-73, Cys-103, Cys-106, Cys-109, and Cys-113.

Belongs to the complex I 23 kDa subunit family. In terms of assembly, NDH-1 is composed of 14 different subunits. Subunits NuoA, H, J, K, L, M, N constitute the membrane sector of the complex. The cofactor is [4Fe-4S] cluster.

Its subcellular location is the cell inner membrane. The catalysed reaction is a quinone + NADH + 5 H(+)(in) = a quinol + NAD(+) + 4 H(+)(out). Its function is as follows. NDH-1 shuttles electrons from NADH, via FMN and iron-sulfur (Fe-S) centers, to quinones in the respiratory chain. The immediate electron acceptor for the enzyme in this species is believed to be ubiquinone. Couples the redox reaction to proton translocation (for every two electrons transferred, four hydrogen ions are translocated across the cytoplasmic membrane), and thus conserves the redox energy in a proton gradient. The protein is NADH-quinone oxidoreductase subunit I of Brucella abortus (strain S19).